A 114-amino-acid chain; its full sequence is T cell receptor beta variable 4-1 (114 aa).

Residues 1–21 form the signal peptide; the sequence is MGCRLLCCAVLCLLGAVPIDT. The Ig-like domain occupies 22–114; sequence EVTQTPKHLV…SALYLCASSQ (93 aa). Residues Cys42 and Cys110 are joined by a disulfide bond. 2 N-linked (GlcNAc...) asparagine glycosylation sites follow: Asn76 and Asn89.

As to quaternary structure, alpha-beta TR is a heterodimer composed of an alpha and beta chain; disulfide-linked. The alpha-beta TR is associated with the transmembrane signaling CD3 coreceptor proteins to form the TR-CD3 (TcR or TCR). The assembly of alpha-beta TR heterodimers with CD3 occurs in the endoplasmic reticulum where a single alpha-beta TR heterodimer associates with one CD3D-CD3E heterodimer, one CD3G-CD3E heterodimer and one CD247 homodimer forming a stable octameric structure. CD3D-CD3E and CD3G-CD3E heterodimers preferentially associate with TR alpha and TR beta chains, respectively. The association of the CD247 homodimer is the last step of TcR assembly in the endoplasmic reticulum and is required for transport to the cell surface.

The protein localises to the cell membrane. V region of the variable domain of T cell receptor (TR) beta chain that participates in the antigen recognition. Alpha-beta T cell receptors are antigen specific receptors which are essential to the immune response and are present on the cell surface of T lymphocytes. Recognize peptide-major histocompatibility (MH) (pMH) complexes that are displayed by antigen presenting cells (APC), a prerequisite for efficient T cell adaptive immunity against pathogens. Binding of alpha-beta TR to pMH complex initiates TR-CD3 clustering on the cell surface and intracellular activation of LCK that phosphorylates the ITAM motifs of CD3G, CD3D, CD3E and CD247 enabling the recruitment of ZAP70. In turn ZAP70 phosphorylates LAT, which recruits numerous signaling molecules to form the LAT signalosome. The LAT signalosome propagates signal branching to three major signaling pathways, the calcium, the mitogen-activated protein kinase (MAPK) kinase and the nuclear factor NF-kappa-B (NF-kB) pathways, leading to the mobilization of transcription factors that are critical for gene expression and essential for T cell growth and differentiation. The T cell repertoire is generated in the thymus, by V-(D)-J rearrangement. This repertoire is then shaped by intrathymic selection events to generate a peripheral T cell pool of self-MH restricted, non-autoaggressive T cells. Post-thymic interaction of alpha-beta TR with the pMH complexes shapes TR structural and functional avidity. This is T cell receptor beta variable 4-1 from Homo sapiens (Human).